Reading from the N-terminus, the 224-residue chain is EEF1A lysine methyltransferase 3 (224 aa).

S-adenosyl-L-methionine contacts are provided by residues Trp58, 84–86, Asp105, Trp134, and Ala151; that span reads GAG.

The protein belongs to the methyltransferase superfamily. METTL21 family.

It localises to the cytoplasm. It is found in the cytoskeleton. Its subcellular location is the microtubule organizing center. The protein localises to the centrosome. It catalyses the reaction L-lysyl-[protein] + 3 S-adenosyl-L-methionine = N(6),N(6),N(6)-trimethyl-L-lysyl-[protein] + 3 S-adenosyl-L-homocysteine + 3 H(+). The enzyme catalyses L-lysyl-[protein] + S-adenosyl-L-methionine = N(6)-methyl-L-lysyl-[protein] + S-adenosyl-L-homocysteine + H(+). It carries out the reaction N(6)-methyl-L-lysyl-[protein] + S-adenosyl-L-methionine = N(6),N(6)-dimethyl-L-lysyl-[protein] + S-adenosyl-L-homocysteine + H(+). The catalysed reaction is N(6),N(6)-dimethyl-L-lysyl-[protein] + S-adenosyl-L-methionine = N(6),N(6),N(6)-trimethyl-L-lysyl-[protein] + S-adenosyl-L-homocysteine + H(+). In terms of biological role, protein-lysine methyltransferase that selectively mono-, di- and trimethylates 'Lys-165' of the translation elongation factors EEF1A1 and EEF1A2 in an aminoacyl-tRNA and GTP-dependent manner. EEF1A1 methylation by EEF1AKMT3 is dynamic as well as inducible by stress conditions, such as ER-stress, and plays a regulatory role on mRNA translation. In Xenopus tropicalis (Western clawed frog), this protein is EEF1A lysine methyltransferase 3.